The following is an 898-amino-acid chain: MTEESEETVLYIEHRYVCSECNQLYGSLEEVLVHQNSHVPQQHFELVGVADPGVTVATEATSGTGLYQTLIQESQYQCLECGQLLLSPSQLLEHQELHLKMMAPQEAVPAEPPPKVPPLSSSTIHYECVDCKALFASQEMWLSHRQTHLRATPNKAPAPVVLGSPVVLGPPVGQARVAVEHSYRKAEEGGEGAAVPSVAAATEMVTEVELLLYKCSECSQLFQMPADFLEHQATHFPAPVPEAEEPATQQETLVPSPTEAAVSQPDPLPASDHSYELRNELRNGEAMGRDRRGRKPRRSSSGESGATQELFCSACDQIFLSPHQLQQHLRSHREGVFKCPLCSRVFPSPSSLDQHLGDHSSESHFLCVDCGLAFGTEALLLAHRRAHTPNPLHSCPCGKTFVNLTKFLYHRRTHGAGGVPLPTTPVPPEEPAISFPEPAPAETGELEAPELPVSEESSAEPAAPGTYRCLLCSREFSKALQLTRHQRFVHRLERRHKCSICGKMFKKKSHVRNHLRTHTGERPFPCPDCSKPFNSPANLARHRLTHTGERPYRCGDCGKAFTQSSTLRQHRLVHAQHFPYRCQECGVRFHRPYRLLMHRYHHTGEYPYKCRECPRSFLLRRLLEVHQLVVHAGRQPHRCPSCGAAFPSSLRLREHRCAAAAAQAPRRFECGTCGKKVGSAARLQAHEAAHAAAGPGEVLAKEPPAPRAARATRTPVAPSPTALGGTTSAAPAAPARRRGLECSECKKLFSTETSLQVHRRIHTGERPYPCPDCGKAFRQSTHLKDHRRLHTGERPFACEVCGKAFAISMRLAEHRRIHTGERPYSCPDCGKSYRSFSNLWKHRKTHQQQHQAAVRQQLAEAEAAVGLAVMETAVEALPLVEAIEIYPLAEADGVQISG.

3 consecutive C2H2-type zinc fingers follow at residues 16–38, 76–98, and 126–148; these read YVCSECNQLYGSLEEVLVHQNSH, YQCLECGQLLLSPSQLLEHQELH, and YECVDCKALFASQEMWLSHRQTH. S164 bears the Phosphoserine mark. A C2H2-type 4 zinc finger spans residues 213-235; that stretch reads YKCSECSQLFQMPADFLEHQATH. The interval 243-305 is disordered; that stretch reads AEEPATQQET…PRRSSSGESG (63 aa). Residues 273–290 are compositionally biased toward basic and acidic residues; sequence HSYELRNELRNGEAMGRD. S301 is subject to Phosphoserine. 4 C2H2-type zinc fingers span residues 310 to 332, 337 to 359, 365 to 387, and 393 to 414; these read LFCSACDQIFLSPHQLQQHLRSH, FKCPLCSRVFPSPSSLDQHLGDH, FLCVDCGLAFGTEALLLAHRRAH, and HSCPCGKTFVNLTKFLYHRRTH. A disordered region spans residues 417–460; it reads GGVPLPTTPVPPEEPAISFPEPAPAETGELEAPELPVSEESSAE. 6 consecutive C2H2-type zinc fingers follow at residues 467 to 490, 496 to 518, 524 to 546, 552 to 574, 580 to 602, and 608 to 631; these read YRCLLCSREFSKALQLTRHQRFVH, HKCSICGKMFKKKSHVRNHLRTH, FPCPDCSKPFNSPANLARHRLTH, YRCGDCGKAFTQSSTLRQHRLVH, YRCQECGVRFHRPYRLLMHRYHH, and YKCRECPRSFLLRRLLEVHQLVVH. A C2H2-type 15; degenerate zinc finger spans residues 637-660; that stretch reads HRCPSCGAAFPSSLRLREHRCAAA. Residues 668–690 form a C2H2-type 16 zinc finger; the sequence is FECGTCGKKVGSAARLQAHEAAH. The disordered stretch occupies residues 691–735; that stretch reads AAAGPGEVLAKEPPAPRAARATRTPVAPSPTALGGTTSAAPAAPA. Residues 707 to 734 are compositionally biased toward low complexity; the sequence is RAARATRTPVAPSPTALGGTTSAAPAAP. At S719 the chain carries Phosphoserine. T726 carries the post-translational modification Phosphothreonine. 4 C2H2-type zinc fingers span residues 740–762, 768–790, 796–818, and 824–846; these read LECSECKKLFSTETSLQVHRRIH, YPCPDCGKAFRQSTHLKDHRRLH, FACEVCGKAFAISMRLAEHRRIH, and YSCPDCGKSYRSFSNLWKHRKTH. R834 carries the post-translational modification Asymmetric dimethylarginine.

This sequence belongs to the krueppel C2H2-type zinc-finger protein family.

It is found in the nucleus. Functionally, may be involved in transcriptional regulation. The sequence is that of Zinc finger protein 574 (Znf574) from Rattus norvegicus (Rat).